We begin with the raw amino-acid sequence, 499 residues long: Phenylalanine--tRNA ligase alpha subunit (499 aa).

L-phenylalanine contacts are provided by residues T342, 381–383 (QID), and F422. Mg(2+) is bound at residue E424. F447 serves as a coordination point for L-phenylalanine.

Belongs to the class-II aminoacyl-tRNA synthetase family. Phe-tRNA synthetase alpha subunit type 2 subfamily. In terms of assembly, tetramer of two alpha and two beta subunits. Mg(2+) serves as cofactor.

The protein resides in the cytoplasm. The catalysed reaction is tRNA(Phe) + L-phenylalanine + ATP = L-phenylalanyl-tRNA(Phe) + AMP + diphosphate + H(+). The chain is Phenylalanine--tRNA ligase alpha subunit from Pyrococcus furiosus (strain ATCC 43587 / DSM 3638 / JCM 8422 / Vc1).